The sequence spans 164 residues: UPF0304 protein ESA_00925 (164 aa).

Belongs to the UPF0304 family.

This is UPF0304 protein ESA_00925 from Cronobacter sakazakii (strain ATCC BAA-894) (Enterobacter sakazakii).